The following is a 569-amino-acid chain: WD repeat-containing protein 20 (569 aa).

At A2 the chain carries N-acetylalanine. WD repeat units lie at residues 94 to 138, 139 to 210, 211 to 252, 253 to 331, 332 to 426, 427 to 523, and 524 to 559; these read RIYK…KETS, KLFN…KSTR, NPLL…FDSV, ELHG…SGSD, EDFQ…NSVP, PPLP…VPLL, and EPLI…CTWG. S357 and S360 each carry phosphoserine. Polar residues-rich tracts occupy residues 405 to 423 and 431 to 445; these read NATS…TPGN and RSNS…NAGS. The interval 405-445 is disordered; that stretch reads NATSPPAGSNGNSVTTPGNSVPPPLPRSNSLPHSAVSNAGS. Residues S432, S434, and S465 each carry the phosphoserine modification. The interval 450-468 is mediates XPO1-dependent nuclear export of WDR20-USP12 complexes; that stretch reads MDGAIASGVSKFATLSLHD.

In terms of assembly, interacts with USP12; promotes translocation of USP12/WDR20 to the plasma membrane. Component of the USP12/WDR20/WDR48 deubiquitinating complex. Interacts with USP46; contributes to the cytoplasmic localization of the USP46/WDR20 complex. Component of the USP12/DMWD/WDR48 deubiquitinating complex.

It is found in the cytoplasm. Its subcellular location is the nucleus. Regulator of deubiquitinating complexes. Activates deubiquitinating activity of complexes containing USP12. Anchors at the base of the ubiquitin-contacting loop of USP12 and remotely modulates the catalytic center of the enzyme. Regulates shuttling of the USP12 deubiquitinase complex between the plasma membrane, cytoplasm and nucleus. In Homo sapiens (Human), this protein is WD repeat-containing protein 20 (WDR20).